The chain runs to 247 residues: L-cystine import ATP-binding protein TcyC (247 aa).

The ABC transporter domain occupies 2 to 240 (LTVKGLNKSF…PKEERTQRFL (239 aa)). 34 to 41 (GPSGSGKT) serves as a coordination point for ATP.

Belongs to the ABC transporter superfamily. L-cystine importer (TC 3.A.1.3.14) family. The complex is composed of two ATP-binding proteins (TcyC), two transmembrane proteins (TcyB) and a solute-binding protein (TcyA).

Its subcellular location is the cell membrane. Its function is as follows. Part of the ABC transporter complex TcyABC involved in L-cystine import. Responsible for energy coupling to the transport system. The protein is L-cystine import ATP-binding protein TcyC (tcyC) of Bacillus subtilis (strain 168).